Consider the following 1649-residue polypeptide: MAGGRGAAGRGPAEPQESYSQRQDHELQALEAIYGSDFQDLRPDARGRVREPPEINLVLYPQGLAGEEVYVQVELRVKCPPTYPDVVPEIELKNTKGLSNESVNLLKSHLEELAKKQCGEVMIFELAHHVQSFLSEHNKPPPKSFHEEMLERQAQEKQQRLLEARQKEEQEQREILHEIQKRKEEIKEEKKRKEMAKQERLEITSLTNQDHASKRDPAGHRAAAFLHGGSPDFVGNGKARAHSSGRSRRERQYSVCSGEASPGSCDILYFCVGSADQLMVHKGKCVGSDEQLGKVVYNALETATGSFVLLYEWVLQWQKKMGPCLTSQEKEKIDKCKKQIQGAETEFSSLVKLSHPNIVRYFAMNSREEKDSIVVDILAEHISGISLAAHLSHSGPVPMHQLRKYTAQLLAGLDYLHRNSVVHKVLSTASVLVDAEGTVKITDYSISKRLADICKEDVFEQTRVRFSDSALPYKTGKKGDVWRLGLLLLSLSQGQECEEYPVTIPSDLPADFQDFLKKCVCLDDKERWSPQQLLKHSFINPQPKMPLVEQSPEDSGGQDYIETIIPSNQLPSAAFFTETQRQFSRYFIEFEELQLLGKGAFGAVIKVQNKLDGCCYAVKRIPINPASRQFRRIKGEVTLLSRLHHENIVRYYNAWIERHERPAVPGTPPPDYIPQAQNSSATGGKASGDTEELGSVEAAAPPPILSSSVEWSTSAERSNSARFPVTGQDSSSDEEDEDERDGVFSQSFLPASDSDSDIIFDNEDENSKSQNQDEDCNEKDSRHEIEPSVTTEAVHYLYIQMEYCEKSTLRDTIDQGLFRDTSRLWRLFREILDGLAYIHEKGMIHRDLKPVNIFLDSDDHVKIGDFGLATDHLAFNAEGKQDDQAGDHVIKSDPSGHLTGMVGTALYVSPEVQGSTKSAYNQKVDLFSLGIILFEMSYHPMVTASERIFVLNQLRDPTSPKFPDDFEDGEHTKQKSVISWLLNHDPAKRPTAMELLKSELLPPPQMEESELHEVLHHTLANTDGKAYRTMMSQLFCQHSSPAIDYTYDSDILKGNFLIRTAKIQQLVCETIVRVFKRHGAVQLCTPLLLPRNRQIYEHNEAALFMDHSGMLVMLPFDLRVPFARYVARNNILNLKRYCIERVFRPRKLDRFHPKELLECAFDIVTSTANSSLPTAETIYTIYEVIQEFPALQERNYSIYLNHTMLLKAILLHCGIPEDKLSQVYVILYDAVTEKLTRREVEAKFCNLSLSSNSLCRLYKFIEQKGDLQDLTPTINSLIKQKTGIAQLVKYSLKDLEEVVGLLKKLGVKLQVSINLGLVYKVQQHNGIIFQFLAFSKRRQRVVPEILAAGGRYDLLIPKFRGPQALGPVPTAVGVSIAIDKIFAAVLNMGEPVTVSSCDLLVVSAGQMSMSRAINLTQKLWTAGITAEIMYDWSQSQEELQEYCRHHEITYVALVSDKEGSHVKVKSFEKERQTEKRVLESDLVDHVMQKLRTKVGDERNFRDASDNLAVQTLKGSFSNASGLFEIHGTTVVPTVSVISPEKLSASTRRRHEIQVQTRLQTTLANLHQKSSEIEILAVDLPKETILQFLSLEWDADEQAFNTTVKQLLSRLPKQRYLKLVCDEIYNIKVEKKVSVLFLYSYRDDYYRILF.

Positions 1-26 are disordered; that stretch reads MAGGRGAAGRGPAEPQESYSQRQDHE. One can recognise an RWD domain in the interval 25–137; it reads HELQALEAIY…HHVQSFLSEH (113 aa). Residues 146 to 205 adopt a coiled-coil conformation; it reads HEEMLERQAQEKQQRLLEARQKEEQEQREILHEIQKRKEEIKEEKKRKEMAKQERLEITS. Positions 227 to 260 are disordered; it reads HGGSPDFVGNGKARAHSSGRSRRERQYSVCSGEA. Serine 230 is modified (phosphoserine). The segment covering 239-249 has biased composition (basic residues); sequence ARAHSSGRSRR. 2 consecutive Protein kinase domains span residues 296–539 and 590–1001; these read VYNA…HSFI and FEEL…SELL. ATP contacts are provided by residues 596–604 and lysine 619; that span reads LGKGAFGAV. Residues 662-785 form a disordered region; sequence PAVPGTPPPD…CNEKDSRHEI (124 aa). Residue threonine 667 is modified to Phosphothreonine. Residues 705-721 show a composition bias toward polar residues; it reads LSSSVEWSTSAERSNSA. Acidic residues-rich tracts occupy residues 731 to 740 and 754 to 764; these read SSDEEDEDER and SDSDIIFDNED. Aspartate 847 serves as the catalytic Proton acceptor. At threonine 870 the chain carries Phosphothreonine. Residues threonine 899 and threonine 904 each carry the phosphothreonine; by autocatalysis modification. The interval 1022–1493 is histidyl-tRNA synthetase-like; sequence TDGKAYRTMM…DHVMQKLRTK (472 aa). At lysine 1259 the chain carries N6-acetyllysine.

The protein belongs to the protein kinase superfamily. Ser/Thr protein kinase family. GCN2 subfamily. In terms of assembly, homodimer; homodimerization is important for kinase activation by uncharged tRNAs. Interacts with GCN1; this interaction stimulates EIF2AK4/GCN2 kinase activity and is impaired by IMPACT upon a variety of stress conditions, such as amino acid depletion, UV-C irradiation, proteasome inhibitor treatment and glucose deprivation. Interacts with DNAJC3; this interaction inhibits EIF2AK4/GCN2 kinase activity during endoplasmic reticulum (ER), hypothermic and amino acid-starving stress conditions. Interacts with MAP3K20; activates EIF2AK4/GCN2 kinase activity in response to moderate ribotoxic stress. In terms of processing, autophosphorylated; autophosphorylation on Thr-899 is increased upon amino acid starvation and in UV irradiation cells and inhibited in presence of IMPACT.

The protein resides in the cytoplasm. It catalyses the reaction L-seryl-[protein] + ATP = O-phospho-L-seryl-[protein] + ADP + H(+). The enzyme catalyses L-threonyl-[protein] + ATP = O-phospho-L-threonyl-[protein] + ADP + H(+). Its function is as follows. Metabolic-stress sensing protein kinase that phosphorylates the alpha subunit of eukaryotic translation initiation factor 2 (EIF2S1/eIF-2-alpha) in response to low amino acid availability. Plays a role as an activator of the integrated stress response (ISR) required for adaptation to amino acid starvation. EIF2S1/eIF-2-alpha phosphorylation in response to stress converts EIF2S1/eIF-2-alpha into a global protein synthesis inhibitor, leading to a global attenuation of cap-dependent translation, and thus to a reduced overall utilization of amino acids, while concomitantly initiating the preferential translation of ISR-specific mRNAs, such as the transcriptional activator ATF4, and hence allowing ATF4-mediated reprogramming of amino acid biosynthetic gene expression to alleviate nutrient depletion. Required for the translational induction of protein kinase PRKCH following amino acid starvation. Binds uncharged tRNAs. Involved in cell cycle arrest by promoting cyclin D1 mRNA translation repression after the unfolded protein response pathway (UPR) activation or cell cycle inhibitor CDKN1A/p21 mRNA translation activation in response to amino acid deprivation. Plays a role in the consolidation of synaptic plasticity, learning as well as formation of long-term memory. Plays a role in neurite outgrowth inhibition. Plays a role in feeding behavior to maintain amino acid homeostasis; contributes to the innate aversion toward diets of imbalanced amino acid composition. Plays a proapoptotic role in response to glucose deprivation. Promotes global cellular protein synthesis repression in response to UV irradiation independently of the stress-activated protein kinase/c-Jun N-terminal kinase (SAPK/JNK) and p38 MAPK signaling pathways. Plays a role in the antiviral response against alphavirus infection; impairs early viral mRNA translation of the incoming genomic virus RNA, thus preventing alphavirus replication. In Rattus norvegicus (Rat), this protein is eIF-2-alpha kinase GCN2.